A 111-amino-acid polypeptide reads, in one-letter code: U-scoloptoxin(16)-Er8a (111 aa).

The signal sequence occupies residues Met1–Gly26.

This sequence belongs to the scoloptoxin-16 family. Contains 4 disulfide bonds. In terms of tissue distribution, expressed by the venom gland.

The protein localises to the secreted. The chain is U-scoloptoxin(16)-Er8a from Ethmostigmus rubripes (Giant centipede).